The sequence spans 337 residues: Holliday junction branch migration complex subunit RuvB (337 aa).

The interval 4–184 is large ATPase domain (RuvB-L); the sequence is ADRLIQPQVL…FGIPLRLEFY (181 aa). Residues Arg24, Gly65, Lys68, Thr69, Thr70, 131-133, Arg174, Tyr184, and Arg221 contribute to the ATP site; that span reads EDY. Thr69 is a binding site for Mg(2+). The tract at residues 185–255 is small ATPAse domain (RuvB-S); sequence NVKDLCTIVT…VAQQALDMLD (71 aa). A head domain (RuvB-H) region spans residues 258–337; the sequence is QEGFDYLDRK…FNIITPDVPK (80 aa). DNA-binding residues include Arg294, Arg313, and Arg318.

It belongs to the RuvB family. Homohexamer. Forms an RuvA(8)-RuvB(12)-Holliday junction (HJ) complex. HJ DNA is sandwiched between 2 RuvA tetramers; dsDNA enters through RuvA and exits via RuvB. An RuvB hexamer assembles on each DNA strand where it exits the tetramer. Each RuvB hexamer is contacted by two RuvA subunits (via domain III) on 2 adjacent RuvB subunits; this complex drives branch migration. In the full resolvosome a probable DNA-RuvA(4)-RuvB(12)-RuvC(2) complex forms which resolves the HJ.

It is found in the cytoplasm. It carries out the reaction ATP + H2O = ADP + phosphate + H(+). Functionally, the RuvA-RuvB-RuvC complex processes Holliday junction (HJ) DNA during genetic recombination and DNA repair, while the RuvA-RuvB complex plays an important role in the rescue of blocked DNA replication forks via replication fork reversal (RFR). RuvA specifically binds to HJ cruciform DNA, conferring on it an open structure. The RuvB hexamer acts as an ATP-dependent pump, pulling dsDNA into and through the RuvAB complex. RuvB forms 2 homohexamers on either side of HJ DNA bound by 1 or 2 RuvA tetramers; 4 subunits per hexamer contact DNA at a time. Coordinated motions by a converter formed by DNA-disengaged RuvB subunits stimulates ATP hydrolysis and nucleotide exchange. Immobilization of the converter enables RuvB to convert the ATP-contained energy into a lever motion, pulling 2 nucleotides of DNA out of the RuvA tetramer per ATP hydrolyzed, thus driving DNA branch migration. The RuvB motors rotate together with the DNA substrate, which together with the progressing nucleotide cycle form the mechanistic basis for DNA recombination by continuous HJ branch migration. Branch migration allows RuvC to scan DNA until it finds its consensus sequence, where it cleaves and resolves cruciform DNA. This chain is Holliday junction branch migration complex subunit RuvB, found in Shewanella denitrificans (strain OS217 / ATCC BAA-1090 / DSM 15013).